We begin with the raw amino-acid sequence, 1345 residues long: Major capsid protein (1345 aa).

The protein belongs to the herpesviridae major capsid protein family. Homomultimer. Makes the hexons and eleven out of twelve pentons. Interacts with triplex proteins 1/TRX1 and 2/TRX2; adjacent capsomers are linked together in groups of three by triplexes, heterotrimeric complexes composed of one molecule of TRX1 and two molecules of TRX2. Interacts with scaffold protein; this interaction allows efficient MCP transport to the host nucleus. Interacts with capsid vertex component 2/CVC2. Interacts with the small capsomere-interacting protein/SCP.

Its subcellular location is the virion. The protein resides in the host nucleus. In terms of biological role, self-assembles to form an icosahedral capsid with a T=16 symmetry, about 200 nm in diameter, and consisting of 150 hexons and 12 pentons (total of 162 capsomers). Hexons form the edges and faces of the capsid and are each composed of six MCP molecules. In contrast, one penton is found at each of the 12 vertices. Eleven of the pentons are MCP pentamers, while the last vertex is occupied by the portal complex. The capsid is surrounded by a layer of proteinaceous material designated the tegument which, in turn, is enclosed in an envelope of host cell-derived lipids containing virus-encoded glycoproteins. The protein is Major capsid protein of Homo sapiens (Human).